The sequence spans 301 residues: Ribosomal RNA small subunit methyltransferase A (301 aa).

6 residues coordinate S-adenosyl-L-methionine: Asn18, Leu20, Gly45, Glu66, Asp91, and Asn112. Residues 267–301 are disordered; the sequence is PPEAAPVKEKRRMAKNKMTEPANNNLNENSAPEVD. The segment covering 287 to 301 has biased composition (polar residues); sequence PANNNLNENSAPEVD.

The protein belongs to the class I-like SAM-binding methyltransferase superfamily. rRNA adenine N(6)-methyltransferase family. RsmA subfamily.

It is found in the cytoplasm. The catalysed reaction is adenosine(1518)/adenosine(1519) in 16S rRNA + 4 S-adenosyl-L-methionine = N(6)-dimethyladenosine(1518)/N(6)-dimethyladenosine(1519) in 16S rRNA + 4 S-adenosyl-L-homocysteine + 4 H(+). Functionally, specifically dimethylates two adjacent adenosines (A1518 and A1519) in the loop of a conserved hairpin near the 3'-end of 16S rRNA in the 30S particle. May play a critical role in biogenesis of 30S subunits. The polypeptide is Ribosomal RNA small subunit methyltransferase A (Colwellia psychrerythraea (strain 34H / ATCC BAA-681) (Vibrio psychroerythus)).